We begin with the raw amino-acid sequence, 472 residues long: MNMPQSLGNQPLPPEPPSLRTPAEGPGATSPPEHCWPVRPTLRNELDTFSVHFYIFFGPSVALPPERPAVFALRLLPVLDSGGVLSLELQLNVSSLRQENVTVFGCLTHEVPLSLGDAAVTCSKESLAGFLLTVSAASRVARLRIPFPQTGTWFLTLRSLCGVGPRFVRCRNATAEVRLRTFLSPCVDDCGPYGQCKLLRTHNYLYAACECKAGWRGWGCTDSADALTYGFQLLSTLLLCLSNLMFLPPVVLAIRSRYVLEAAVYTFTMFFSTFYHACDQPGIVVFCIMDYDVLQFCDFLGSLMSVWVTVIAMARLQPVVKQVLYLLGAMLLSMALQLDRHGLWNLLGPSLFALGILATAWTVRSVRRRHCYPPTWRRWLFCLCPGSLIAGSAILLYAFVETRDNYFYIHSIWHMLIAGSVGFLLPPRAKTDRRVPSGARARGCGYQLCINEQEELGLVGPGGATVSSICAS.

Residues 1–37 (MNMPQSLGNQPLPPEPPSLRTPAEGPGATSPPEHCWP) are disordered. Residues 1–233 (MNMPQSLGNQ…ADALTYGFQL (233 aa)) are Extracellular-facing. Asn-92 and Asn-100 each carry an N-linked (GlcNAc...) asparagine glycan. The 40-residue stretch at 182–221 (FLSPCVDDCGPYGQCKLLRTHNYLYAACECKAGWRGWGCT) folds into the EGF-like domain. 3 disulfide bridges follow: Cys-186–Cys-196, Cys-190–Cys-209, and Cys-211–Cys-220. Residues 234–254 (LSTLLLCLSNLMFLPPVVLAI) form a helical membrane-spanning segment. Over 255–257 (RSR) the chain is Cytoplasmic. A helical transmembrane segment spans residues 258 to 277 (YVLEAAVYTFTMFFSTFYHA). Residues 278–292 (CDQPGIVVFCIMDYD) are Extracellular-facing. A helical transmembrane segment spans residues 293–313 (VLQFCDFLGSLMSVWVTVIAM). At 314 to 315 (AR) the chain is on the cytoplasmic side. The helical transmembrane segment at 316-336 (LQPVVKQVLYLLGAMLLSMAL) threads the bilayer. Residues 337–342 (QLDRHG) lie on the Extracellular side of the membrane. A helical transmembrane segment spans residues 343 to 363 (LWNLLGPSLFALGILATAWTV). The Cytoplasmic portion of the chain corresponds to 364–379 (RSVRRRHCYPPTWRRW). A helical membrane pass occupies residues 380–400 (LFCLCPGSLIAGSAILLYAFV). Topologically, residues 401–405 (ETRDN) are extracellular. Residues 406 to 426 (YFYIHSIWHMLIAGSVGFLLP) traverse the membrane as a helical segment. At 427-472 (PRAKTDRRVPSGARARGCGYQLCINEQEELGLVGPGGATVSSICAS) the chain is on the cytoplasmic side.

The protein belongs to the TMEM8 family. As to quaternary structure, may interact with EZR. N-glycosylated.

Its subcellular location is the cell membrane. It is found in the cytoplasm. It localises to the nucleus. The protein resides in the mitochondrion. The protein localises to the endoplasmic reticulum. May function as a regulator of the EGFR pathway. Probable tumor suppressor which may function in cell growth, proliferation and adhesion. In Bos taurus (Bovine), this protein is Transmembrane protein 8B (TMEM8B).